Consider the following 162-residue polypeptide: HTH-type transcriptional regulator IscR (162 aa).

Positions 2 to 131 (RLTSKGRYAV…NNITLGELVN (130 aa)) constitute an HTH rrf2-type domain. The H-T-H motif DNA-binding region spans 28–51 (LADISERQGISLSYLEQLFSRLRK). [2Fe-2S] cluster-binding residues include Cys-92, Cys-98, and Cys-104.

The cofactor is [2Fe-2S] cluster.

Its function is as follows. Regulates the transcription of several operons and genes involved in the biogenesis of Fe-S clusters and Fe-S-containing proteins. The protein is HTH-type transcriptional regulator IscR of Shigella sonnei (strain Ss046).